A 670-amino-acid chain; its full sequence is UvrABC system protein B (670 aa).

The 388-residue stretch at Glu25 to Arg412 folds into the Helicase ATP-binding domain. Gly38–Thr45 lines the ATP pocket. The Beta-hairpin motif lies at Tyr91–Ile114. The region spanning Gln429 to Ile582 is the Helicase C-terminal domain. The region spanning Ser631–Arg666 is the UVR domain.

This sequence belongs to the UvrB family. Forms a heterotetramer with UvrA during the search for lesions. Interacts with UvrC in an incision complex.

The protein localises to the cytoplasm. Functionally, the UvrABC repair system catalyzes the recognition and processing of DNA lesions. A damage recognition complex composed of 2 UvrA and 2 UvrB subunits scans DNA for abnormalities. Upon binding of the UvrA(2)B(2) complex to a putative damaged site, the DNA wraps around one UvrB monomer. DNA wrap is dependent on ATP binding by UvrB and probably causes local melting of the DNA helix, facilitating insertion of UvrB beta-hairpin between the DNA strands. Then UvrB probes one DNA strand for the presence of a lesion. If a lesion is found the UvrA subunits dissociate and the UvrB-DNA preincision complex is formed. This complex is subsequently bound by UvrC and the second UvrB is released. If no lesion is found, the DNA wraps around the other UvrB subunit that will check the other stand for damage. This is UvrABC system protein B from Pseudomonas aeruginosa (strain ATCC 15692 / DSM 22644 / CIP 104116 / JCM 14847 / LMG 12228 / 1C / PRS 101 / PAO1).